Consider the following 360-residue polypeptide: Protein Wnt-2 (360 aa).

The N-terminal stretch at 1 to 25 (MNAPLGGIWLGLPLLLTWLSPEVSS) is a signal peptide. 11 disulfide bridges follow: Cys-76-Cys-87, Cys-127-Cys-135, Cys-137-Cys-157, Cys-206-Cys-220, Cys-208-Cys-215, Cys-278-Cys-309, Cys-294-Cys-304, Cys-308-Cys-348, Cys-324-Cys-339, Cys-326-Cys-336, and Cys-331-Cys-332. Ser-212 carries O-palmitoleoyl serine; by PORCN lipidation. Residue Asn-295 is glycosylated (N-linked (GlcNAc...) asparagine).

This sequence belongs to the Wnt family. In terms of processing, palmitoleoylation is required for efficient binding to frizzled receptors. Depalmitoleoylation leads to Wnt signaling pathway inhibition.

Its subcellular location is the secreted. The protein localises to the extracellular space. It localises to the extracellular matrix. Its function is as follows. Ligand for members of the frizzled family of seven transmembrane receptors. Probable developmental protein. May be a signaling molecule which affects the development of discrete regions of tissues. Is likely to signal over only few cell diameters. In Oryctolagus cuniculus (Rabbit), this protein is Protein Wnt-2 (WNT2).